The sequence spans 238 residues: 2-C-methyl-D-erythritol 4-phosphate cytidylyltransferase (238 aa).

It belongs to the IspD/TarI cytidylyltransferase family. IspD subfamily.

It catalyses the reaction 2-C-methyl-D-erythritol 4-phosphate + CTP + H(+) = 4-CDP-2-C-methyl-D-erythritol + diphosphate. It participates in isoprenoid biosynthesis; isopentenyl diphosphate biosynthesis via DXP pathway; isopentenyl diphosphate from 1-deoxy-D-xylulose 5-phosphate: step 2/6. Its function is as follows. Catalyzes the formation of 4-diphosphocytidyl-2-C-methyl-D-erythritol from CTP and 2-C-methyl-D-erythritol 4-phosphate (MEP). This Aliivibrio fischeri (strain MJ11) (Vibrio fischeri) protein is 2-C-methyl-D-erythritol 4-phosphate cytidylyltransferase.